Reading from the N-terminus, the 332-residue chain is Aquaporin-7-2 (332 aa).

Positions 1–40 (MSGQHQITEQPSGNPLSRTSTLIQEKPLTPTSSHAGTQKQ) are enriched in polar residues. Residues 1-46 (MSGQHQITEQPSGNPLSRTSTLIQEKPLTPTSSHAGTQKQPEAPRQ) form a disordered region. At 1–66 (MSGQHQITEQ…RHAIRKPMAE (66 aa)) the chain is on the cytoplasmic side. A helical membrane pass occupies residues 67–87 (FFGVALLIIFGAGSACQVVLS). At 88–100 (TNPDVASSARGSF) the chain is on the extracellular side. The chain crosses the membrane as a helical span at residues 101 to 121 (LSINFGWAIGIAMGVWVSGGI). At 122–144 (SGGHINPAITIAMATYRGFPWCK) the chain is on the cytoplasmic side. The short motif at 127-129 (NPA) is the NPA 1 element. Residues 145–165 (VPSYILAQVLGGVVGAALVYA) traverse the membrane as a helical segment. At 166–199 (NYIHAIDVFEGGHHIRTEATASLFATYALPYMTQ) the chain is on the extracellular side. A helical membrane pass occupies residues 200–220 (ASCFFSEFLATAVLSMMVFAL). The Cytoplasmic portion of the chain corresponds to 221-230 (TDKRNHSPTN). Residues 231-251 (GLLPFALFILFVGLGASLGME) form a helical membrane-spanning segment. The Extracellular portion of the chain corresponds to 252-283 (TAYALNPARDFGPRLFLAMAGYGKALFNYRSQ). An NPA 2 motif is present at residues 257-259 (NPA). Residues 284-304 (YWLWAPIIAPVLGAQAGGLLY) form a helical membrane-spanning segment. Residues 305–332 (DTFLNDGDNSPIKWRCASSQEQQLAEVV) are Cytoplasmic-facing.

It belongs to the MIP/aquaporin (TC 1.A.8) family.

The protein resides in the membrane. It catalyses the reaction H2O(in) = H2O(out). Its function is as follows. Water channel required to facilitate the transport of water across membranes. Does not mediate the transport carbon dioxide across the membrane. This Laccaria bicolor (Bicoloured deceiver) protein is Aquaporin-7-2.